Reading from the N-terminus, the 1040-residue chain is Multidrug resistance protein MdtB (1040 aa).

Transmembrane regions (helical) follow at residues 16-36 (FIMR…AGII), 342-362 (DTQF…YVFL), 369-389 (IIPA…MVFL), 396-416 (LTLM…IVVI), 440-460 (IGFT…PLLF), 472-492 (FAVT…TLTP), 537-557 (WATL…WIVI), 869-889 (LIVA…ESFI), 890-910 (HPVT…LALM), 911-931 (LSGS…IGIV), 968-988 (ILMT…STGV), and 998-1018 (IGMV…TPVI).

This sequence belongs to the resistance-nodulation-cell division (RND) (TC 2.A.6) family. MdtB subfamily. As to quaternary structure, part of a tripartite efflux system composed of MdtA, MdtB and MdtC. MdtB forms a heteromultimer with MdtC.

It localises to the cell inner membrane. The polypeptide is Multidrug resistance protein MdtB (Enterobacter sp. (strain 638)).